Consider the following 225-residue polypeptide: Glucosyl-3-phosphoglycerate phosphatase (225 aa).

Arginine 10 is a binding site for substrate. Histidine 11 serves as the catalytic Tele-phosphohistidine intermediate. Substrate is bound at residue arginine 60. Glutamate 84 functions as the Proton donor/acceptor in the catalytic mechanism. Histidine 158 lines the substrate pocket.

Belongs to the phosphoglycerate mutase family. In terms of assembly, homodimer.

It carries out the reaction (2R)-2-O-(alpha-D-glucopyranosyl)-3-phospho-glycerate + H2O = (2R)-2-O-(alpha-D-glucopyranosyl)-glycerate + phosphate. Functionally, involved in the biosynthesis of mycobacterial methylglucose lipopolysaccharides (MGLP). Catalyzes the dephosphorylation of glucosyl-3-phosphoglycerate (GPG) to glucosylglycerate. This is Glucosyl-3-phosphoglycerate phosphatase from Mycolicibacterium vanbaalenii (strain DSM 7251 / JCM 13017 / BCRC 16820 / KCTC 9966 / NRRL B-24157 / PYR-1) (Mycobacterium vanbaalenii).